Reading from the N-terminus, the 636-residue chain is ABC transporter ATP-binding protein RamA (636 aa).

The next 5 membrane-spanning stretches (helical) occupy residues 45–65 (VLVLLCSVAAAVAAVAQPLAL), 78–98 (AGWWLPLSAALLLGELLLDSA), 175–195 (LVDVWVALCVLTGLPALALLL), 269–289 (GVLVPLLTLAATAVGGLRLAA), and 297–317 (LLAVGRYAQLTAGVGAAASLL). In terms of domain architecture, ABC transmembrane type-1 spans 45–322 (VLVLLCSVAA…AASLLGAIVR (278 aa)). The ABC transporter domain maps to 354–585 (LRLCGVRVLR…AGYREVFGAG (232 aa)). 386–393 (GRSGAGKS) is a binding site for ATP. Residues 589 to 606 (GAGAGAGAGADAGAGADA) show a composition bias toward gly residues. The interval 589–636 (GAGAGAGAGADAGAGADAGPGPDSGAATAVGGSGPGPVRRPEPEEARP) is disordered. Over residues 607–618 (GPGPDSGAATAV) the composition is skewed to low complexity. The segment covering 627–636 (RRPEPEEARP) has biased composition (basic and acidic residues).

The protein belongs to the ABC transporter superfamily.

The protein resides in the cell membrane. Probably involved in exporting SapB from the cell. Expression of the ram locus (ramA, ramB and ramR) induces rapid aerial mycelium formation in S.lividans. The sequence is that of ABC transporter ATP-binding protein RamA from Streptomyces coelicolor (strain ATCC BAA-471 / A3(2) / M145).